A 350-amino-acid chain; its full sequence is Ribosomal RNA large subunit methyltransferase M (350 aa).

Residues 217 to 220 (APGG), D236, D256, and D272 each bind S-adenosyl-L-methionine. K301 functions as the Proton acceptor in the catalytic mechanism.

The protein belongs to the class I-like SAM-binding methyltransferase superfamily. RNA methyltransferase RlmE family. RlmM subfamily. As to quaternary structure, monomer.

The protein localises to the cytoplasm. It carries out the reaction cytidine(2498) in 23S rRNA + S-adenosyl-L-methionine = 2'-O-methylcytidine(2498) in 23S rRNA + S-adenosyl-L-homocysteine + H(+). Its function is as follows. Catalyzes the 2'-O-methylation at nucleotide C2498 in 23S rRNA. In Cellvibrio japonicus (strain Ueda107) (Pseudomonas fluorescens subsp. cellulosa), this protein is Ribosomal RNA large subunit methyltransferase M.